A 525-amino-acid chain; its full sequence is MSPLNDLKINLNGQYTFFLNQNVISKYSGSLRKMIKQSKKKRNKKKRIITIEINDFPGGPDGFELVSRFCYHNGEILIDVSNVSTLYCCSVFLGMSEKFCFSNLFLQTEKFLEEVFYGSWSDIVSCLKNCEQVFFQADSYGLVDKLIFAALNKISQNSDDFSSSSLSSFASSLSPEMAKNTSESDGRYISRSVACGRSNEWWFEDMTNLSPKIILKLVMIIGAYKTNIKSLVLTRFLLHYLKTKLQTKSRTTTELMRNKLEYSDLADTAVRGVISAGTRTFSCRKLFWILRVLSSFSLSRESRIGLETLIGEMLEQATLDDLLISARGSRESGFYNVDLVIRLLKVFVKNREEEEEESRERNMKEIGKLIDKYLREISPDQNLKVPKFLGVAESLPDSARDCFDGVYRAIDIYLQSHPNLTPQDRTEICRCLNYKKLTMETCKQLARNPKIPPEIAIEALKSRCGNQEHTTSDVKVANKSFSCRYSEEKKKPVVLHLEITEKLAERLKTKGGYNLKVMDSFREGL.

The region spanning 5–79 (NDLKINLNGQ…CYHNGEILID (75 aa)) is the BTB domain. The NPH3 domain occupies 200 to 466 (EWWFEDMTNL…IEALKSRCGN (267 aa)).

The protein belongs to the NPH3 family.

It functions in the pathway protein modification; protein ubiquitination. Functionally, may act as a substrate-specific adapter of an E3 ubiquitin-protein ligase complex (CUL3-RBX1-BTB) which mediates the ubiquitination and subsequent proteasomal degradation of target proteins. This is BTB/POZ domain-containing protein At1g50280 from Arabidopsis thaliana (Mouse-ear cress).